The following is a 178-amino-acid chain: Probable chorismate pyruvate-lyase (178 aa).

Arg72, Leu110, and Glu169 together coordinate substrate.

Belongs to the UbiC family.

The protein localises to the cytoplasm. It catalyses the reaction chorismate = 4-hydroxybenzoate + pyruvate. The protein operates within cofactor biosynthesis; ubiquinone biosynthesis. Removes the pyruvyl group from chorismate, with concomitant aromatization of the ring, to provide 4-hydroxybenzoate (4HB) for the ubiquinone pathway. The protein is Probable chorismate pyruvate-lyase of Nitrosomonas eutropha (strain DSM 101675 / C91 / Nm57).